We begin with the raw amino-acid sequence, 130 residues long: Small ribosomal subunit protein uS9 (130 aa).

The protein belongs to the universal ribosomal protein uS9 family.

In Leptothrix cholodnii (strain ATCC 51168 / LMG 8142 / SP-6) (Leptothrix discophora (strain SP-6)), this protein is Small ribosomal subunit protein uS9.